A 385-amino-acid chain; its full sequence is Rhomboid domain-containing protein 3 (385 aa).

A run of 5 helical transmembrane segments spans residues 13–33 (ALPL…LLGA), 58–78 (LGHT…TLGW), 93–113 (SAVL…LGLS), 146–166 (WLLP…PPFL), and 168–188 (LLCG…WLEL). One can recognise a UBA domain in the interval 322 to 361 (SVSSLRLQQLQHMGFPTEQAAVALAATGRVEGAVSLLVEG).

Its subcellular location is the membrane. In Rattus norvegicus (Rat), this protein is Rhomboid domain-containing protein 3 (Rhbdd3).